A 175-amino-acid polypeptide reads, in one-letter code: Shikimate kinase (175 aa).

ATP is bound at residue 10–15; the sequence is GAGKTT. Residue Thr14 participates in Mg(2+) binding. Positions 32, 56, and 78 each coordinate substrate. Arg116 is an ATP binding site. Arg135 contacts substrate.

Belongs to the shikimate kinase family. Monomer. The cofactor is Mg(2+).

The protein localises to the cytoplasm. It carries out the reaction shikimate + ATP = 3-phosphoshikimate + ADP + H(+). It functions in the pathway metabolic intermediate biosynthesis; chorismate biosynthesis; chorismate from D-erythrose 4-phosphate and phosphoenolpyruvate: step 5/7. Catalyzes the specific phosphorylation of the 3-hydroxyl group of shikimic acid using ATP as a cosubstrate. This is Shikimate kinase from Aromatoleum aromaticum (strain DSM 19018 / LMG 30748 / EbN1) (Azoarcus sp. (strain EbN1)).